A 600-amino-acid chain; its full sequence is Netrin-1 (600 aa).

A signal peptide spans 1 to 24 (MMRAMWEALAALAAVSCLVGAVRG). Residues 47–284 (HPRRCIPDFV…AVSDLQVGGR (238 aa)) enclose the Laminin N-terminal domain. N95, N116, and N131 each carry an N-linked (GlcNAc...) asparagine glycan. Intrachain disulfides connect C119/C152, C285/C294, C287/C304, C306/C315, C318/C338, C341/C350, C343/C368, C371/C380, C383/C401, C404/C416, C406/C423, C425/C434, C437/C451, and C472/C544. Laminin EGF-like domains are found at residues 285–340 (CKCN…ECVA), 341–403 (CNCN…ACKA), and 404–453 (CDCH…PCIK). N417 is a glycosylation site (N-linked (GlcNAc...) asparagine). An NTR domain is found at 472-600 (CDSYCKASKG…KFQQREKKEL (129 aa)). The Cell attachment site signature appears at 530-532 (RGD).

In terms of assembly, binds to its receptors; DCC, UNC5A, UNC5B, UNC5C and probably UNC5D. Binds to its receptor; DSCAM. Interacts with APP.

It localises to the secreted. The protein resides in the cytoplasm. Functionally, netrins control guidance of CNS commissural axons and peripheral motor axons. Its association with either DCC or some UNC5 receptors will lead to axon attraction or repulsion, respectively. Binding to UNC5C might cause dissociation of UNC5C from polymerized TUBB3 in microtubules and thereby lead to increased microtubule dynamics and axon repulsion. Involved in dorsal root ganglion axon projection towards the spinal cord. It also serves as a survival factor via its association with its receptors which prevent the initiation of apoptosis. Involved in colorectal tumorigenesis by regulating apoptosis. The polypeptide is Netrin-1 (NTN1) (Sus scrofa (Pig)).